The following is a 231-amino-acid chain: MKKPIVCCDFDGTITKNDNIIRIMKHFAPSEWTKLKDDVLTKEITIQEGVGQMFQLLKSDQKEAIQSFILEDTEIREGFKQFVDHVKKADIPFYVLSGGMDFFVYPILEGIVEREDIYCNHASFHEEHIQIEWPHACDSQCQNGCGCCKPSIIRELTRENDFIIMIGDSVTDVEAAKHADLTFARDYLLNECKELGLVHKEYETFIDLKAQFDQIKEVKEWQTKRTSAGRS.

This sequence belongs to the HAD-like hydrolase superfamily. MtnX family.

The enzyme catalyses 2-hydroxy-5-methylsulfanyl-3-oxopent-1-enyl phosphate + H2O = 1,2-dihydroxy-5-(methylsulfanyl)pent-1-en-3-one + phosphate. The protein operates within amino-acid biosynthesis; L-methionine biosynthesis via salvage pathway; L-methionine from S-methyl-5-thio-alpha-D-ribose 1-phosphate: step 4/6. Its function is as follows. Dephosphorylates 2-hydroxy-3-keto-5-methylthiopentenyl-1-phosphate (HK-MTPenyl-1-P) yielding 1,2-dihydroxy-3-keto-5-methylthiopentene (DHK-MTPene). This Bacillus pumilus (strain SAFR-032) protein is 2-hydroxy-3-keto-5-methylthiopentenyl-1-phosphate phosphatase.